The chain runs to 326 residues: Nicotianamine synthase 2 (326 aa).

This sequence belongs to the nicotianamine synthase (NAS)-like family. Expressed in roots.

It carries out the reaction 3 S-adenosyl-L-methionine = nicotianamine + 3 S-methyl-5'-thioadenosine + 3 H(+). Functionally, synthesizes nicotianamine, a polyamine that is the first intermediate in the synthesis of the phytosiderophores of the mugineic acid type found in gramineae which serve as a sensor for the physiological iron status within the plant, and/or might be involved in the transport of iron. This chain is Nicotianamine synthase 2 (NAS2), found in Oryza sativa subsp. japonica (Rice).